A 209-amino-acid chain; its full sequence is Ras-like protein (209 aa).

Position 10-17 (10-17 (GGGLVGKS)) interacts with GTP. The short motif at 55–63 (YDPTVEDSR) is the Effector region element. A Phosphothreonine modification is found at Thr-58. Residues 79 to 83 (DTAGQ) and 140 to 143 (NKAD) each bind GTP. Cys-206 is modified (cysteine methyl ester). Cys-206 is lipidated: S-geranylgeranyl cysteine. Residues 207–209 (LII) constitute a propeptide, removed in mature form.

It belongs to the small GTPase superfamily. Ras family. Post-translationally, phosphorylated in the presence of insulin.

It is found in the cell membrane. It catalyses the reaction GTP + H2O = GDP + phosphate + H(+). Alternates between an inactive form bound to GDP and an active form bound to GTP. Activated by a guanine nucleotide-exchange factor (GEF) and inactivated by a GTPase-activating protein (GAP). Functionally, this protein is activated by the insulin/insulin (insulin-like)-receptor system. This transition enables the ras protein to interact with the lectin-receptor/lectin complex, a process which ultimately lead to an initiation of an intra-cellular signal-transduction chain. The sequence is that of Ras-like protein from Geodia cydonium (Sponge).